The primary structure comprises 510 residues: Chromosomal replication initiator protein DnaA (510 aa).

Positions 1 to 87 (MSVELWQQCV…IGSRRSSAPR (87 aa)) are domain I, interacts with DnaA modulators. Residues 87-173 (RAAPNAPVSA…QVEGALKHTS (87 aa)) are domain II. A disordered region spans residues 140–160 (DSFDAMAEPASAPASSGRAEQ). Residues 144 to 157 (AMAEPASAPASSGR) are compositionally biased toward low complexity. The tract at residues 174 to 390 (YLNRTFTFDT…GALKRVIAHS (217 aa)) is domain III, AAA+ region. Residues G218, G220, K221, and T222 each coordinate ATP. The domain IV, binds dsDNA stretch occupies residues 391–510 (HFMGRDITIE…YKNLLRTLTT (120 aa)).

Belongs to the DnaA family. As to quaternary structure, oligomerizes as a right-handed, spiral filament on DNA at oriC.

It localises to the cytoplasm. Functionally, plays an essential role in the initiation and regulation of chromosomal replication. ATP-DnaA binds to the origin of replication (oriC) to initiate formation of the DNA replication initiation complex once per cell cycle. Binds the DnaA box (a 9 base pair repeat at the origin) and separates the double-stranded (ds)DNA. Forms a right-handed helical filament on oriC DNA; dsDNA binds to the exterior of the filament while single-stranded (ss)DNA is stabiized in the filament's interior. The ATP-DnaA-oriC complex binds and stabilizes one strand of the AT-rich DNA unwinding element (DUE), permitting loading of DNA polymerase. After initiation quickly degrades to an ADP-DnaA complex that is not apt for DNA replication. Binds acidic phospholipids. This is Chromosomal replication initiator protein DnaA from Pseudomonas putida (strain GB-1).